We begin with the raw amino-acid sequence, 240 residues long: EF-hand domain-containing protein D1 (240 aa).

The disordered stretch occupies residues 17 to 54; the sequence is EVRAETDQGDPQPAPCDAPAGHPEPEPPARAPTASADS. 2 consecutive EF-hand domains span residues 91-126 and 127-162; these read RLLKDLEKMFKTYDAGRDGFIDLMELKLMMEKLGAP and QTHLGLKSMIKEVDEDFDGKLSFREFLLIFHKAAAG. Residues D104, D108, E115, D140, D142, D144, K146, and E151 each coordinate Ca(2+).

As to expression, widely expressed. Highest expression in testis, followed by ovary, kidney, cerebrum, cerebellum, heart, liver, and spleen. In the cerebrum and cerebellum, undetectable at embryonic stages, expression increases after birth up to adult stage. In adult CNS, detected in neurons of the cerebellum, cerebrum and hippocampus formation, including dentate gyrus and Cornu Ammonis, but not in the white matter. In the testis, expressed in spermatocytes, but not in spermatogonia nor in interstitial cells. In ovary, found predominantly in mural granulosa cells and those of the cumulus oophorus. In kidney, expressed in collecting ducts, but not in glomeruli. Not detected in skeletal muscle.

The protein resides in the mitochondrion inner membrane. In terms of biological role, acts as a calcium sensor for mitochondrial flash (mitoflash) activation, an event characterized by stochastic bursts of superoxide production. May play a role in neuronal differentiation. The protein is EF-hand domain-containing protein D1 (Efhd1) of Mus musculus (Mouse).